The chain runs to 444 residues: Methylenetetrahydrofolate--tRNA-(uracil-5-)-methyltransferase TrmFO (444 aa).

9-14 (GAGLAG) is a binding site for FAD.

This sequence belongs to the MnmG family. TrmFO subfamily. Requires FAD as cofactor.

The protein localises to the cytoplasm. The enzyme catalyses uridine(54) in tRNA + (6R)-5,10-methylene-5,6,7,8-tetrahydrofolate + NADH + H(+) = 5-methyluridine(54) in tRNA + (6S)-5,6,7,8-tetrahydrofolate + NAD(+). The catalysed reaction is uridine(54) in tRNA + (6R)-5,10-methylene-5,6,7,8-tetrahydrofolate + NADPH + H(+) = 5-methyluridine(54) in tRNA + (6S)-5,6,7,8-tetrahydrofolate + NADP(+). Functionally, catalyzes the folate-dependent formation of 5-methyl-uridine at position 54 (M-5-U54) in all tRNAs. The chain is Methylenetetrahydrofolate--tRNA-(uracil-5-)-methyltransferase TrmFO from Koribacter versatilis (strain Ellin345).